We begin with the raw amino-acid sequence, 361 residues long: tRNA-specific 2-thiouridylase MnmA (361 aa).

ATP-binding positions include 8-15 (AMSGGVDS) and M35. Positions 95 to 97 (NPD) are interaction with target base in tRNA. Catalysis depends on C100, which acts as the Nucleophile. A disulfide bridge connects residues C100 and C196. G124 contributes to the ATP binding site. Residues 146-148 (KDQ) are interaction with tRNA. The active-site Cysteine persulfide intermediate is the C196. An interaction with tRNA region spans residues 303–304 (RY).

It belongs to the MnmA/TRMU family.

It localises to the cytoplasm. The catalysed reaction is S-sulfanyl-L-cysteinyl-[protein] + uridine(34) in tRNA + AH2 + ATP = 2-thiouridine(34) in tRNA + L-cysteinyl-[protein] + A + AMP + diphosphate + H(+). Its function is as follows. Catalyzes the 2-thiolation of uridine at the wobble position (U34) of tRNA, leading to the formation of s(2)U34. In Chlamydia pneumoniae (Chlamydophila pneumoniae), this protein is tRNA-specific 2-thiouridylase MnmA.